Reading from the N-terminus, the 320-residue chain is Tabersonine synthase (320 aa).

Positions 78 to 80 (HGA) match the Involved in the stabilization of the negatively charged intermediate by the formation of the oxyanion hole motif. Gly-81 is a (-)-tabersonine binding site. Ser-170 serves as the catalytic Proton acceptor. Asp-266 is a catalytic residue. A (-)-tabersonine-binding site is contributed by Tyr-297. The active-site Proton donor/acceptor is Tyr-297.

This sequence belongs to the 'GDXG' lipolytic enzyme family. Interacts with dehydroprecondylocarpine acetate synthase (DPAS). In terms of tissue distribution, expressed in leaf epidermis.

It is found in the cytoplasm. Its subcellular location is the cytosol. The protein localises to the nucleus. The catalysed reaction is dehydrosecodine = (-)-tabersonine. The enzyme catalyses dihydroprecondylocarpine acetate = (-)-tabersonine + acetate + H(+). Its pathway is alkaloid biosynthesis. In terms of biological role, component of iboga and aspidosperma monoterpenoid indole alkaloids (MIAs, e.g. tabersonine and catharanthine) biosynthesis pathway from 19E-geissoschizine, psychoactive compounds likely to be used in the treatment of opioid dependence. Catalyzes the conversion of dehydrosecodine to tabersonine, a precursor of vindoline; this process starts with the conversion of dihydroprecondylocarpine acetate to dehydrosecodine. The polypeptide is Tabersonine synthase (Catharanthus roseus (Madagascar periwinkle)).